The following is a 509-amino-acid chain: Cobyric acid synthase (509 aa).

Residues 262–459 (EIKVGIIKLP…IHGIFENDSW (198 aa)) form the GATase cobBQ-type domain. The active-site Nucleophile is Cys343. Residue His451 is part of the active site.

Belongs to the CobB/CobQ family. CobQ subfamily.

It functions in the pathway cofactor biosynthesis; adenosylcobalamin biosynthesis. Catalyzes amidations at positions B, D, E, and G on adenosylcobyrinic A,C-diamide. NH(2) groups are provided by glutamine, and one molecule of ATP is hydrogenolyzed for each amidation. This is Cobyric acid synthase from Prochlorococcus marinus (strain MIT 9301).